A 94-amino-acid chain; its full sequence is MIGRTPKLSELVLGETAEALSLHCDEALENLSDDDEEDHQDRQVFIERPYAVSVPCKRCRQTISFVCVCAPEAIRTLNRLLSASLSLVCPECCN.

The segment at 1-42 (MIGRTPKLSELVLGETAEALSLHCDEALENLSDDDEEDHQDR) is E7 terminal domain. An LXCXE motif; interaction with host RB1 and TMEM173/STING motif is present at residues 22–26 (LHCDE). A zinc finger lies at 56-92 (CKRCRQTISFVCVCAPEAIRTLNRLLSASLSLVCPEC). The Nuclear export signal signature appears at 74 to 82 (IRTLNRLLS).

It belongs to the papillomaviridae E7 protein family. Homodimer. Homooligomer. Interacts with host RB1; this interaction induces dissociation of RB1-E2F1 complex thereby disrupting RB1 activity. Interacts with host EP300; this interaction represses EP300 transcriptional activity. Interacts with protein E2; this interaction inhibits E7 oncogenic activity. Interacts with host TMEM173/STING; this interaction impairs the ability of TMEM173/STING to sense cytosolic DNA and promote the production of type I interferon (IFN-alpha and IFN-beta). Post-translationally, highly phosphorylated.

The protein localises to the host cytoplasm. The protein resides in the host nucleus. Functionally, plays a role in viral genome replication by driving entry of quiescent cells into the cell cycle. Stimulation of progression from G1 to S phase allows the virus to efficiently use the cellular DNA replicating machinery to achieve viral genome replication. E7 protein has both transforming and trans-activating activities. Induces the disassembly of the E2F1 transcription factor from RB1, with subsequent transcriptional activation of E2F1-regulated S-phase genes. Interferes with host histone deacetylation mediated by HDAC1 and HDAC2, leading to transcription activation. Also plays a role in the inhibition of both antiviral and antiproliferative functions of host interferon alpha. Interaction with host TMEM173/STING impairs the ability of TMEM173/STING to sense cytosolic DNA and promote the production of type I interferon (IFN-alpha and IFN-beta). The polypeptide is Protein E7 (Cottontail rabbit papillomavirus (strain Kansas) (CRPV)).